Reading from the N-terminus, the 800-residue chain is Chondroitin sulfate synthase 1 (800 aa).

Topologically, residues 1 to 7 (MAARGRR) are cytoplasmic. A helical; Signal-anchor for type II membrane protein transmembrane segment spans residues 8-28 (AWLSMLLGLVLGFVLASRLVL). Residues 29 to 800 (PRASELKRVG…GGSHGSARTA (772 aa)) lie on the Lumenal side of the membrane. The disordered stretch occupies residues 36 to 66 (RVGPRRRPSPEGCRPGQEASQPGGARGDARG). Residues Asn188 and Asn622 are each glycosylated (N-linked (GlcNAc...) asparagine). Positions 632 and 746 each coordinate a divalent metal cation.

Belongs to the chondroitin N-acetylgalactosaminyltransferase family. The cofactor is Co(2+). It depends on Mn(2+) as a cofactor. Cd(2+) is required as a cofactor.

It localises to the golgi apparatus. Its subcellular location is the golgi stack membrane. It is found in the secreted. The catalysed reaction is 3-O-(beta-D-GlcA-(1-&gt;3)-beta-D-GalNAc-(1-&gt;4)-beta-D-GlcA-(1-&gt;3)-beta-D-Gal-(1-&gt;3)-beta-D-Gal-(1-&gt;4)-beta-D-Xyl)-L-seryl-[protein] + UDP-N-acetyl-alpha-D-galactosamine = 3-O-(beta-D-GalNAc-(1-&gt;4)-beta-D-GlcA-(1-&gt;3)-beta-D-GalNAc-(1-&gt;4)-beta-D-GlcA-(1-&gt;3)-beta-D-Gal-(1-&gt;3)-beta-D-Gal-(1-&gt;4)-beta-D-Xyl)-L-seryl-[protein] + UDP + H(+). It carries out the reaction 3-O-{beta-D-GlcA-(1-&gt;3)-[beta-D-GalNAc-(1-&gt;4)-beta-D-GlcA-(1-&gt;3)](n)-beta-D-GalNAc-(1-&gt;4)-beta-D-GlcA-(1-&gt;3)-beta-D-Gal-(1-&gt;3)-beta-D-Gal-(1-&gt;4)-beta-D-Xyl}-L-seryl-[protein] + UDP-N-acetyl-alpha-D-galactosamine = 3-O-{[beta-D-GalNAc-(1-&gt;4)-beta-D-GlcA-(1-&gt;3)](n+1)-beta-D-GalNAc-(1-&gt;4)-beta-D-GlcA-(1-&gt;3)-beta-D-Gal-(1-&gt;3)-beta-D-Gal-(1-&gt;4)-beta-D-Xyl}-L-seryl-[protein] + UDP + H(+). It catalyses the reaction 3-O-(beta-D-GalNAc-(1-&gt;4)-beta-D-GlcA-(1-&gt;3)-beta-D-Gal-(1-&gt;3)-beta-D-Gal-(1-&gt;4)-beta-D-Xyl)-L-seryl-[protein] + UDP-alpha-D-glucuronate = 3-O-(beta-D-GlcA-(1-&gt;3)-beta-D-GalNAc-(1-&gt;4)-beta-D-GlcA-(1-&gt;3)-beta-D-Gal-(1-&gt;3)-beta-D-Gal-(1-&gt;4)-beta-D-Xyl)-L-seryl-[protein] + UDP + H(+). The enzyme catalyses 3-O-{[beta-D-GalNAc-(1-&gt;4)-beta-D-GlcA-(1-&gt;3)](n)-beta-D-GalNAc-(1-&gt;4)-beta-D-GlcA-(1-&gt;3)-beta-D-Gal-(1-&gt;3)-beta-D-Gal-(1-&gt;4)-beta-D-Xyl}-L-seryl-[protein] + UDP-alpha-D-glucuronate = 3-O-{beta-D-GlcA-(1-&gt;3)-[beta-D-GalNAc-(1-&gt;4)-beta-D-GlcA-(1-&gt;3)](n)-beta-D-GalNAc-(1-&gt;4)-beta-D-GlcA-(1-&gt;3)-beta-D-Gal-(1-&gt;3)-beta-D-Gal-(1-&gt;4)-beta-D-Xyl}-L-seryl-[protein] + UDP + H(+). In terms of biological role, has both beta-1,3-glucuronic acid and beta-1,4-N-acetylgalactosamine transferase activity. Transfers glucuronic acid (GlcUA) from UDP-GlcUA and N-acetylgalactosamine (GalNAc) from UDP-GalNAc to the non-reducing end of the elongating chondroitin polymer. Involved in the negative control of osteogenesis likely through the modulation of NOTCH signaling. The protein is Chondroitin sulfate synthase 1 (Chsy1) of Mus musculus (Mouse).